A 700-amino-acid polypeptide reads, in one-letter code: Chondroitinase-AC (700 aa).

The first 22 residues, 1 to 22, serve as a signal peptide directing secretion; sequence MKKLFVTCIVFFSILSPALLIA. Active-site residues include histidine 225, tyrosine 234, and arginine 288. Serine 328 is a glycosylation site (O-linked (Man...) serine). Ca(2+) contacts are provided by glutamate 405, aspartate 407, aspartate 416, and tyrosine 417. The O-linked (Man...) serine glycan is linked to serine 455.

This sequence belongs to the polysaccharide lyase 8 family. Monomer. Ca(2+) is required as a cofactor.

The enzyme catalyses Eliminative degradation of polysaccharides containing 1,4-beta-D-hexosaminyl and 1,3-beta-D-glucuronosyl linkages to disaccharides containing 4-deoxy-beta-D-gluc-4-enuronosyl groups.. This chain is Chondroitinase-AC (cslA), found in Pedobacter heparinus (strain ATCC 13125 / DSM 2366 / CIP 104194 / JCM 7457 / NBRC 12017 / NCIMB 9290 / NRRL B-14731 / HIM 762-3).